Reading from the N-terminus, the 390-residue chain is Heparan sulfate glucosamine 3-O-sulfotransferase 3B1 (390 aa).

The interval Met1–Pro25 is disordered. The Cytoplasmic portion of the chain corresponds to Met1 to Lys32. A helical; Signal-anchor for type II membrane protein transmembrane segment spans residues Leu33 to Gly53. Topologically, residues Ser54–Asp390 are lumenal. The disordered stretch occupies residues Thr79–Ile125. Asn82 carries an N-linked (GlcNAc...) asparagine glycan. Lys147 to Arg151 is a binding site for 3'-phosphoadenylyl sulfate. Residues Glu169–Arg175 and Lys200–Ser203 contribute to the substrate site. 3'-phosphoadenylyl sulfate contacts are provided by Arg228 and Ser236. Asn258 is a glycosylation site (N-linked (GlcNAc...) asparagine). Residue Trp268–Ser269 participates in substrate binding. A glycan (N-linked (GlcNAc...) asparagine) is linked at Asn329. Cys336 and Cys348 form a disulfide bridge. Lys353 to His357 is a binding site for 3'-phosphoadenylyl sulfate.

The protein belongs to the sulfotransferase 1 family.

It is found in the golgi apparatus membrane. It catalyses the reaction alpha-D-glucosaminyl-[heparan sulfate](n) + 3'-phosphoadenylyl sulfate = 3-sulfo-alpha-D-glucosaminyl-[heparan sulfate](n) + adenosine 3',5'-bisphosphate + H(+). In terms of biological role, sulfotransferase that utilizes 3'-phospho-5'-adenylyl sulfate (PAPS) to catalyze the transfer of a sulfo group to an N-unsubstituted glucosamine linked to a 2-O-sulfo iduronic acid unit on heparan sulfate. Catalyzes the O-sulfation of glucosamine in IdoUA2S-GlcNS and also in IdoUA2S-GlcNH2. Unlike HS3ST1/3-OST-1, does not convert non-anticoagulant heparan sulfate to anticoagulant heparan sulfate. The sequence is that of Heparan sulfate glucosamine 3-O-sulfotransferase 3B1 (Hs3st3b1) from Mus musculus (Mouse).